The sequence spans 238 residues: Riboflavin synthase (238 aa).

2 Lumazine-binding repeats span residues 1–103 and 104–205; these read MFTG…FGGH and YVQG…EKQI. Residues 4-6, 54-56, and 68-73 contribute to the 2,4-dihydroxypteridine site; these read GIV, CLT, and GISPET. The residue at position 95 (Ser-95) is a Phosphoserine. 2,4-dihydroxypteridine-binding positions include 107–109, Lys-143, 152–154, and 170–175; these read GHV, SLT, and SMIKHT.

In terms of assembly, homotrimer.

It carries out the reaction 2 6,7-dimethyl-8-(1-D-ribityl)lumazine + H(+) = 5-amino-6-(D-ribitylamino)uracil + riboflavin. It functions in the pathway cofactor biosynthesis; riboflavin biosynthesis; riboflavin from 2-hydroxy-3-oxobutyl phosphate and 5-amino-6-(D-ribitylamino)uracil: step 2/2. Catalyzes the dismutation of two molecules of 6,7-dimethyl-8-ribityllumazine, resulting in the formation of riboflavin and 5-amino-6-(D-ribitylamino)uracil. This chain is Riboflavin synthase, found in Saccharomyces cerevisiae (strain ATCC 204508 / S288c) (Baker's yeast).